Consider the following 424-residue polypeptide: MPLLWLRGFLLASCWIIVRSSPTPGSEGHGSAPDCPSCALATLPKDGPNSQPEMVEAVKKHILNMLHLKKRPDVTQPVPKAALLNAIRKLHVGKVGENGYVEIEDDIGRRAEMNELMEQTSEIITFAESGTARKTLHFEISKEGSDLSVVERAEVWLFLKVPKANRTRTKVTIRLFQQQKHPQGSLDTGDEAEEMGLKGERSELLLSEKVVDARKSTWHIFPVSSSIQRLLDQGKSSLDVRIACEQCQESGASLVLLGKKKKKEVDGDGKKKDGSDGGLEEEKEQSHRPFLMLQARQSEDHPHRRRRRGLECDGKVNICCKKQFFVSFKDIGWNDWIIAPSGYHANYCEGECPSHIAGTSGSSLSFHSTVINHYRMRGHSPFANLKSCCVPTKLRPMSMLYYDDGQNIIKKDIQNMIVEECGCS.

Residues 1–20 (MPLLWLRGFLLASCWIIVRS) form the signal peptide. Positions 21 to 308 (SPTPGSEGHG…EDHPHRRRRR (288 aa)) are excised as a propeptide. Residue Asn-165 is glycosylated (N-linked (GlcNAc...) asparagine). The segment covering 264–275 (EVDGDGKKKDGS) has biased composition (basic and acidic residues). The interval 264 to 306 (EVDGDGKKKDGSDGGLEEEKEQSHRPFLMLQARQSEDHPHRRR) is disordered. 4 disulfides stabilise this stretch: Cys-312-Cys-320, Cys-319-Cys-389, Cys-348-Cys-421, and Cys-352-Cys-423.

It belongs to the TGF-beta family. In terms of assembly, dimeric, linked by one or more disulfide bonds. Inhibin A is a dimer of alpha/INHA and beta-A/INHBA. Activin A is a homodimer of beta-A/INHBA. Activin AB is a dimer of beta-A/INHBA and beta-B/INHBB. Interacts with FST and FSTL3; these interactions prevent activin A interaction to its type II receptor. Activin A interacts with ACVR2A. Activin A interacts with BMPR2. Inhibin A interacts with ACVR1; this interaction creates a non-signaling complex (NSC) that inhibits ACVR1-mediated BMP signaling. Inhibin A interacts with ACVR2A. Uterus, ovary and liver.

It localises to the secreted. Its function is as follows. Inhibins/activins are involved in regulating a number of diverse functions such as hypothalamic and pituitary hormone secretion, gonadal hormone secretion, germ cell development and maturation, erythroid differentiation, insulin secretion, nerve cell survival, embryonic axial development or bone growth, depending on their subunit composition. In terms of biological role, activin A is a homodimer of INHBA that plays a role in several essential biological processes including embryonic development, stem cell maintenance and differentiation, haematopoiesis, cell proliferation and tissue fibrosis. Signals through type I (such as ACVR1B or ACVR1C) and type II receptors (such as ACVR2A, ACVR2B or BMPR2) which, upon ligand binding, phosphorylate SMAD2 and SMAD3 intracellular signaling mediators that form a complex with SMAD4, translocate to the nucleus and modulate gene expression. Can also activate alternative non-canonical intracellular signaling pathways including the p38 MAPK, extracellular signal-regulated kinases 1/2 (ERK1/2) and c-Jun N-terminal kinases (JNKs) to modulate cell migration and differentiation. Alternatively, promotes osteoblastic differentiation via ACVRL1-SMAD1/5/9 pathway. In addition, can engage the type I receptor ACVR1 to form an ACVR1-activin A-type II receptor non-signaling complex (NSC) that renders receptors unavailable for engagement with BMPs, hence resulting in an apparent inhibition of ACVR1-mediated BMP signaling. Inhibin A is a dimer of alpha/INHA and beta-A/INHBA that functions as a feedback regulator in the hypothalamic-pituitary-gonadal (HPG) axis. Inhibits the secretion of FSH from the anterior pituitary gland by acting on pituitary gonadotrope cells. Antagonizes activin A by binding to the proteoglycan, betaglycan, and forming a stable complex with and, thereby, sequestering type II activin receptors while excluding type I receptor. In Mus musculus (Mouse), this protein is Inhibin beta A chain (Inhba).